A 155-amino-acid polypeptide reads, in one-letter code: Ribosomal RNA large subunit methyltransferase H (155 aa).

S-adenosyl-L-methionine contacts are provided by residues Leu-73, Gly-104, and 123-128 (LSALTL).

It belongs to the RNA methyltransferase RlmH family. As to quaternary structure, homodimer.

It is found in the cytoplasm. It catalyses the reaction pseudouridine(1915) in 23S rRNA + S-adenosyl-L-methionine = N(3)-methylpseudouridine(1915) in 23S rRNA + S-adenosyl-L-homocysteine + H(+). Its function is as follows. Specifically methylates the pseudouridine at position 1915 (m3Psi1915) in 23S rRNA. This chain is Ribosomal RNA large subunit methyltransferase H, found in Chromohalobacter salexigens (strain ATCC BAA-138 / DSM 3043 / CIP 106854 / NCIMB 13768 / 1H11).